The sequence spans 448 residues: Adenylosuccinate synthetase (448 aa).

GTP contacts are provided by residues 36–42 (GDEGKGK) and 64–66 (GHT). The Proton acceptor role is filled by Asp-37. 2 residues coordinate Mg(2+): Asp-37 and Gly-64. IMP-binding positions include 37 to 40 (DEGK), 62 to 65 (NAGH), Thr-154, Arg-168, Asn-246, Thr-261, and Arg-325. Catalysis depends on His-65, which acts as the Proton donor. Position 321-327 (321-327 (VTTKRKR)) interacts with substrate. GTP contacts are provided by residues Arg-327, 353 to 355 (KLD), and 436 to 438 (GVG).

This sequence belongs to the adenylosuccinate synthetase family. Homodimer. It depends on Mg(2+) as a cofactor.

The protein localises to the cytoplasm. The catalysed reaction is IMP + L-aspartate + GTP = N(6)-(1,2-dicarboxyethyl)-AMP + GDP + phosphate + 2 H(+). It functions in the pathway purine metabolism; AMP biosynthesis via de novo pathway; AMP from IMP: step 1/2. Plays an important role in the de novo pathway and in the salvage pathway of purine nucleotide biosynthesis. Catalyzes the first committed step in the biosynthesis of AMP from IMP. In Drosophila mojavensis (Fruit fly), this protein is Adenylosuccinate synthetase.